We begin with the raw amino-acid sequence, 434 residues long: Eukaryotic translation initiation factor 3 subunit E-2 (434 aa).

One can recognise a PCI domain in the interval phenylalanine 219 to leucine 392.

The protein belongs to the eIF-3 subunit E family. Component of the eukaryotic translation initiation factor 3 (eIF-3) complex. The eIF-3 complex interacts with pix. Interacts with mxt.

The protein resides in the cytoplasm. Functionally, component of the eukaryotic translation initiation factor 3 (eIF-3) complex, which is involved in protein synthesis of a specialized repertoire of mRNAs and, together with other initiation factors, stimulates binding of mRNA and methionyl-tRNAi to the 40S ribosome. The eIF-3 complex specifically targets and initiates translation of a subset of mRNAs involved in cell proliferation. This chain is Eukaryotic translation initiation factor 3 subunit E-2 (eIF3-S6-2), found in Drosophila willistoni (Fruit fly).